The primary structure comprises 257 residues: Nickel import system ATP-binding protein NikD (257 aa).

One can recognise an ABC transporter domain in the interval 4 to 245 (IDIQNLTIKN…HLHPYTERLI (242 aa)). An ATP-binding site is contributed by 37–44 (GESGAGKS).

The protein belongs to the ABC transporter superfamily. As to quaternary structure, the complex is composed of two ATP-binding proteins (NikD and NikE), two transmembrane proteins (NikB and NikC) and a solute-binding protein (NikA).

It localises to the cell membrane. It carries out the reaction Ni(2+)(out) + ATP + H2O = Ni(2+)(in) + ADP + phosphate + H(+). Its function is as follows. Part of the ABC transporter complex NikABCDE (Opp2) involved in nickel import. Probably responsible for energy coupling to the transport system. This chain is Nickel import system ATP-binding protein NikD, found in Staphylococcus aureus (strain Mu50 / ATCC 700699).